Consider the following 274-residue polypeptide: Ribosomal RNA small subunit methyltransferase A (274 aa).

The S-adenosyl-L-methionine site is built by Asn-27, Leu-29, Gly-54, Glu-75, Asp-100, and Asn-121.

Belongs to the class I-like SAM-binding methyltransferase superfamily. rRNA adenine N(6)-methyltransferase family. RsmA subfamily.

Its subcellular location is the cytoplasm. It catalyses the reaction adenosine(1518)/adenosine(1519) in 16S rRNA + 4 S-adenosyl-L-methionine = N(6)-dimethyladenosine(1518)/N(6)-dimethyladenosine(1519) in 16S rRNA + 4 S-adenosyl-L-homocysteine + 4 H(+). Functionally, specifically dimethylates two adjacent adenosines (A1518 and A1519) in the loop of a conserved hairpin near the 3'-end of 16S rRNA in the 30S particle. May play a critical role in biogenesis of 30S subunits. In Acinetobacter baylyi (strain ATCC 33305 / BD413 / ADP1), this protein is Ribosomal RNA small subunit methyltransferase A.